A 322-amino-acid polypeptide reads, in one-letter code: N-acetyl-gamma-glutamyl-phosphate reductase (322 aa).

Residue Cys132 is part of the active site.

It belongs to the NAGSA dehydrogenase family. Type 1 subfamily.

The protein localises to the cytoplasm. The enzyme catalyses N-acetyl-L-glutamate 5-semialdehyde + phosphate + NADP(+) = N-acetyl-L-glutamyl 5-phosphate + NADPH + H(+). The protein operates within amino-acid biosynthesis; L-arginine biosynthesis; N(2)-acetyl-L-ornithine from L-glutamate: step 3/4. Functionally, catalyzes the NADPH-dependent reduction of N-acetyl-5-glutamyl phosphate to yield N-acetyl-L-glutamate 5-semialdehyde. This Phocaeicola vulgatus (strain ATCC 8482 / DSM 1447 / JCM 5826 / CCUG 4940 / NBRC 14291 / NCTC 11154) (Bacteroides vulgatus) protein is N-acetyl-gamma-glutamyl-phosphate reductase.